The primary structure comprises 147 residues: Putative fibroblast growth factor 1 (147 aa).

Asparagine 25 contributes to the heparin binding site. The tract at residues 117–133 (KKNGKMKRGPRTHIGQK) is heparin-binding.

The protein belongs to the heparin-binding growth factors family.

It localises to the secreted. The protein resides in the cytoplasm. The protein localises to the cell cortex. It is found in the cytosol. Its subcellular location is the nucleus. Functionally, plays an important role in the regulation of cell survival, cell division, angiogenesis, cell differentiation and cell migration. Functions as a potent mitogen in vitro. Acts as a ligand for FGFR1 and integrins. Binds to FGFR1 in the presence of heparin leading to FGFR1 dimerization and activation via sequential autophosphorylation on tyrosine residues which act as docking sites for interacting proteins, leading to the activation of several signaling cascades. Binds to integrins. Its binding to integrins and subsequent ternary complex formation with integrins and FGFR1 are essential for FGF1 signaling. This Danio rerio (Zebrafish) protein is Putative fibroblast growth factor 1 (fgf1).